Reading from the N-terminus, the 369-residue chain is NAD(P)H-quinone oxidoreductase subunit 1, chloroplastic (369 aa).

Helical transmembrane passes span 25 to 45 (FGFIWIITPILTYTLGVTIGI), 104 to 124 (VMVVVPVFLSYLVIPLGHGII), 130 to 150 (IGVFFWIAVSSVAPLGLLTAG), 270 to 290 (LSATILYLGGWNSPIPFLFLP), and 306 to 326 (VISITIAIIITLAKAYSFLFI).

It belongs to the complex I subunit 1 family. As to quaternary structure, NDH is composed of at least 16 different subunits, 5 of which are encoded in the nucleus.

The protein localises to the plastid. Its subcellular location is the chloroplast thylakoid membrane. It catalyses the reaction a plastoquinone + NADH + (n+1) H(+)(in) = a plastoquinol + NAD(+) + n H(+)(out). The catalysed reaction is a plastoquinone + NADPH + (n+1) H(+)(in) = a plastoquinol + NADP(+) + n H(+)(out). Functionally, NDH shuttles electrons from NAD(P)H:plastoquinone, via FMN and iron-sulfur (Fe-S) centers, to quinones in the photosynthetic chain and possibly in a chloroplast respiratory chain. The immediate electron acceptor for the enzyme in this species is believed to be plastoquinone. Couples the redox reaction to proton translocation, and thus conserves the redox energy in a proton gradient. The chain is NAD(P)H-quinone oxidoreductase subunit 1, chloroplastic from Huperzia lucidula (Shining clubmoss).